The primary structure comprises 185 residues: UPF0301 protein HCH_00550 (185 aa).

It belongs to the UPF0301 (AlgH) family.

This chain is UPF0301 protein HCH_00550, found in Hahella chejuensis (strain KCTC 2396).